A 485-amino-acid polypeptide reads, in one-letter code: MTITTQQLIALLPLLIVGLTVVVVMLSIAWRRNHFLNATLSVVGLNAALLSLWFVGQAGAMDVTPLMRVDGYAMLYTGLVLLASLATCTFAYPWLQGYNDNKEEFYLLVLIAALGGILLANANHLASLFLGIELISLPLFGLVGYAFRQKRSLEAAIKYTILSAAASSFLLFGMALVYAQSGSLSFVTLGKSLADNMLSEPLLLAGLGLMIVGLGFKLSLVPFHLWTPDVYQGAPAPVSTFLATASKIAIFGVVMRLFLYAPVGDSEAVRVVLGVLAFASILFGNLMALTQTNIKRLLGYSSISHLGYLLVALIALKSGDMSMETVGVYLAGYLFSSLGAFGVVSLMSSPYRGPDADSLYSYRGLFWHRPILSAVMTVMMLSLAGIPMTLGFIGKFYVLAVGVQSNLWWLTGAVVVGSAIGLYYYLRVAVSLYLNAPQQLNRDAPSNWAYSAGGVVVLISALLVLVLGVWPQPLITLVQLAKPLM.

14 helical membrane-spanning segments follow: residues 8–28 (LIALLPLLIVGLTVVVVMLSI), 35–55 (FLNATLSVVGLNAALLSLWFV), 75–95 (LYTGLVLLASLATCTFAYPWL), 105–125 (FYLLVLIAALGGILLANANHL), 127–147 (SLFLGIELISLPLFGLVGYAF), 159–179 (YTILSAAASSFLLFGMALVYA), 203–223 (LLAGLGLMIVGLGFKLSLVPF), 235–255 (PAPVSTFLATASKIAIFGVVM), 271–291 (VVLGVLAFASILFGNLMALTQ), 297–317 (LLGYSSISHLGYLLVALIALK), 326–346 (VGVYLAGYLFSSLGAFGVVSL), 374–394 (AVMTVMMLSLAGIPMTLGFIG), 408–427 (WWLTGAVVVGSAIGLYYYLR), and 455–475 (VVVLISALLVLVLGVWPQPLI).

Belongs to the complex I subunit 2 family. NDH-1 is composed of 13 different subunits. Subunits NuoA, H, J, K, L, M, N constitute the membrane sector of the complex.

It is found in the cell inner membrane. The catalysed reaction is a quinone + NADH + 5 H(+)(in) = a quinol + NAD(+) + 4 H(+)(out). Functionally, NDH-1 shuttles electrons from NADH, via FMN and iron-sulfur (Fe-S) centers, to quinones in the respiratory chain. The immediate electron acceptor for the enzyme in this species is believed to be ubiquinone. Couples the redox reaction to proton translocation (for every two electrons transferred, four hydrogen ions are translocated across the cytoplasmic membrane), and thus conserves the redox energy in a proton gradient. The chain is NADH-quinone oxidoreductase subunit N from Cronobacter sakazakii (strain ATCC BAA-894) (Enterobacter sakazakii).